Reading from the N-terminus, the 313-residue chain is Olfactory receptor 5D18 (313 aa).

The Extracellular portion of the chain corresponds to 1–26 (MLLTDRNTSGTTFTLLGFSDYPELQV). N7 carries N-linked (GlcNAc...) asparagine glycosylation. Residues 27-47 (PLFLVFLAIYNVTVLGNIGLI) form a helical membrane-spanning segment. The Cytoplasmic segment spans residues 48–55 (VIIKINPK). Residues 56–76 (LHTPMYFFLSQLSFVDFCYSS) traverse the membrane as a helical segment. The Extracellular segment spans residues 77-100 (IIAPKMLVNLVVKDRTISFLGCVV). An intrachain disulfide couples C98 to C190. A helical membrane pass occupies residues 101-121 (QFFFFCTFVVTESFLLAVMAY). The Cytoplasmic portion of the chain corresponds to 122–140 (DRFVAICNPLLYTVNMSQK). A helical membrane pass occupies residues 141-161 (LCVLLVVGSYAWGVSCSLELT). At 162 to 197 (CSALKLCFHGFNTINHFFCEFSSLLSLSCSDTYINQ) the chain is on the extracellular side. The helical transmembrane segment at 198–218 (WLLFFLATFNEISTLLIVLTS) threads the bilayer. Residues 219–238 (YAFIVVTILKMRSVSGRRKA) lie on the Cytoplasmic side of the membrane. A helical membrane pass occupies residues 239 to 259 (FSTCASHLTAITIFHGTILFL). At 260-272 (YCVPNSKNSRHTV) the chain is on the extracellular side. Residues 273–293 (KVASVFYTVVIPMLNPLIYSL) form a helical membrane-spanning segment. The Cytoplasmic segment spans residues 294-313 (RNKDVKDTVTEILDTKVFSY).

It belongs to the G-protein coupled receptor 1 family.

Its subcellular location is the cell membrane. Odorant receptor. In Homo sapiens (Human), this protein is Olfactory receptor 5D18 (OR5D18).